The following is a 246-amino-acid chain: Probable transcriptional regulatory protein WD_0484 (246 aa).

The segment at 1 to 22 (MAGHSQFSNIKHRKGAQDAKRS) is disordered.

This sequence belongs to the TACO1 family.

The protein localises to the cytoplasm. This chain is Probable transcriptional regulatory protein WD_0484, found in Wolbachia pipientis wMel.